Reading from the N-terminus, the 442-residue chain is Type 3 secretion system ATPase (442 aa).

Residue 173-178 (GVGKST) coordinates ATP.

It belongs to the ATPase alpha/beta chains family. T3SS ATPase subfamily. As to quaternary structure, the core secretion machinery of the T3SS is composed of approximately 20 different proteins, including cytoplasmic components, a base, an export apparatus and a needle. This subunit is part of the cytosolic complex. Forms homohexamers.

It is found in the cytoplasm. The catalysed reaction is ATP + H2O + cellular proteinSide 1 = ADP + phosphate + cellular proteinSide 2.. ATPase component of the type III secretion system (T3SS), also called injectisome, which is used to inject bacterial effector proteins into eukaryotic host cells. Acts as a molecular motor to provide the energy that is required for the export of proteins. Required for type III secretion apparatus (T3SA) formation, proper protein secretion, host cell invasion and virulence. May play a critical role in T3SS substrate recognition, disassembly of the effector/chaperone complex and unfolding of the effector in an ATP-dependent manner prior to secretion. The protein is Type 3 secretion system ATPase of Xanthomonas euvesicatoria.